Reading from the N-terminus, the 326-residue chain is tRNA-modifying protein YgfZ (326 aa).

Folate-binding residues include W27 and W189.

The protein belongs to the tRNA-modifying YgfZ family.

It localises to the cytoplasm. In terms of biological role, folate-binding protein involved in regulating the level of ATP-DnaA and in the modification of some tRNAs. It is probably a key factor in regulatory networks that act via tRNA modification, such as initiation of chromosomal replication. This Salmonella typhimurium (strain LT2 / SGSC1412 / ATCC 700720) protein is tRNA-modifying protein YgfZ.